The following is a 295-amino-acid chain: Non-selective voltage-gated ion channel VDAC2 (295 aa).

The ATP site is built by Lys-24 and Lys-32. Lys-32 is subject to N6-acetyllysine; alternate. Residue Lys-32 is modified to N6-succinyllysine; alternate. Lys-32 participates in a covalent cross-link: Glycyl lysine isopeptide (Lys-Gly) (interchain with G-Cter in ubiquitin); alternate. Beta stranded transmembrane passes span 38–45 (LVKLDVKT) and 51–60 (VEFSTSGSSN). Residue Lys-65 forms a Glycyl lysine isopeptide (Lys-Gly) (interchain with G-Cter in ubiquitin) linkage. A beta stranded membrane pass occupies residues 66–76 (VSGTLETKYKW). Residue Tyr-79 is modified to Phosphotyrosine. A run of 3 beta stranded transmembrane segments spans residues 81–88 (LTFTEKWN), 92–100 (TLGTEIAIE), and 107–116 (LKLTFDTTFS). At Thr-119 the chain carries Phosphothreonine. Lys-121 is modified (N6-acetyllysine; alternate). Lys-121 is covalently cross-linked (Glycyl lysine isopeptide (Lys-Gly) (interchain with G-Cter in ubiquitin); alternate). A Glycyl lysine isopeptide (Lys-Gly) (interchain with G-Cter in ubiquitin) cross-link involves residue Lys-122. 4 consecutive transmembrane segments (beta stranded) span residues 122–131 (KSGKIKSAYK), 135–144 (INLGCDVDFD), 148–157 (PAIHGSAVFG), and 161–170 (WLAGYQMTFD). Lys-173 is covalently cross-linked (Glycyl lysine isopeptide (Lys-Gly) (interchain with G-Cter in ubiquitin)). The next 6 beta stranded transmembrane spans lie at 177 to 187 (TRSNFAVGYRT), 190 to 197 (FQLHTNVN), 201 to 210 (EFGGSIYQKV), 214 to 222 (FDTSVNLAW), 229 to 238 (TRFGIAAKYQ), and 243 to 250 (ASISAKVN). Ser-252 carries the phosphoserine modification. NAD(+)-binding positions include 254–256 (LIG) and 272–276 (SALVD). A run of 2 beta stranded transmembrane segments spans residues 254 to 263 (LIGVGYTQTL) and 267 to 275 (VKLTLSALV). An N6-acetyllysine; alternate modification is found at Lys-278. Residue Lys-278 forms a Glycyl lysine isopeptide (Lys-Gly) (interchain with G-Cter in ubiquitin); alternate linkage. The beta stranded transmembrane segment at 285 to 295 (HKLGLALELEA) threads the bilayer.

The protein belongs to the eukaryotic mitochondrial porin family. Monomer, homodimer and higher order oligomers; formation of higher order structures is necessary for scramblase activity. Interacts with ARMC12 in a TBC1D21-dependent manner. Interacts with KLC3. Interacts with SPATA33. Interacts with PPP3CC in a SPATA33-dependent manner. Post-translationally, ubiquitinated by PRKN during mitophagy, leading to its degradation and enhancement of mitophagy. Deubiquitinated by USP30. Highest levels of expression detected in testis, less but still abundant expression in heart, kidney, brain, and skeletal muscle. Expressed in the sperm midpiece (at protein level).

It localises to the mitochondrion outer membrane. Its subcellular location is the membrane. The catalysed reaction is chloride(in) = chloride(out). The enzyme catalyses K(+)(in) = K(+)(out). It carries out the reaction a 1,2-diacyl-sn-glycero-3-phospho-L-serine(in) = a 1,2-diacyl-sn-glycero-3-phospho-L-serine(out). It catalyses the reaction a 1,2-diacyl-sn-glycero-3-phosphocholine(in) = a 1,2-diacyl-sn-glycero-3-phosphocholine(out). The catalysed reaction is a 1,2-diacyl-sn-glycero-3-phospho-(1D-myo-inositol)(in) = a 1,2-diacyl-sn-glycero-3-phospho-(1D-myo-inositol)(out). In terms of biological role, non-selective voltage-gated ion channel that mediates the transport of anions and cations through the mitochondrion outer membrane and plasma membrane. The channel adopts an open conformation at zero mV and a closed conformation at both positive and negative potentials. There are two populations of channels; the main that functions in a lower open-state conductance with lower ion selectivity, that switch, in a voltage-dependent manner, from the open to a low-conducting 'closed' state and the other that has a normal ion selectivity in the typical high conductance, 'open' state. Binds various lipids, including the sphingolipid ceramide, the phospholipid phosphatidylcholine, and the sterols cholesterol and oxysterol. Binding of ceramide promotes the mitochondrial outer membrane permeabilization (MOMP) apoptotic pathway. Catalyzes the scrambling of phospholipids across the outer mitochondrial membrane; the mechanism is unrelated to channel activity and is capable of translocating both anionic and zwitterionic phospholipids. The polypeptide is Non-selective voltage-gated ion channel VDAC2 (Mus musculus (Mouse)).